Reading from the N-terminus, the 352-residue chain is Putative F-box protein At5g14160 (352 aa).

The region spanning 14-60 is the F-box domain; it reads GVDWSELPEDVIRLVLRRLRLSDFHRARAVCSTWCRVWGDCVSKPNQ.

The chain is Putative F-box protein At5g14160 from Arabidopsis thaliana (Mouse-ear cress).